We begin with the raw amino-acid sequence, 158 residues long: 2-C-methyl-D-erythritol 2,4-cyclodiphosphate synthase (158 aa).

A divalent metal cation is bound by residues Asp-9 and His-11. Residues 9 to 11 (DVH) and 35 to 36 (HS) contribute to the 4-CDP-2-C-methyl-D-erythritol 2-phosphate site. A divalent metal cation is bound at residue His-43. 4-CDP-2-C-methyl-D-erythritol 2-phosphate is bound by residues 57–59 (DIG), 62–66 (FPDTD), 133–136 (TTTE), Phe-140, and Arg-143.

This sequence belongs to the IspF family. As to quaternary structure, homotrimer. A divalent metal cation serves as cofactor.

It carries out the reaction 4-CDP-2-C-methyl-D-erythritol 2-phosphate = 2-C-methyl-D-erythritol 2,4-cyclic diphosphate + CMP. It participates in isoprenoid biosynthesis; isopentenyl diphosphate biosynthesis via DXP pathway; isopentenyl diphosphate from 1-deoxy-D-xylulose 5-phosphate: step 4/6. In terms of biological role, involved in the biosynthesis of isopentenyl diphosphate (IPP) and dimethylallyl diphosphate (DMAPP), two major building blocks of isoprenoid compounds. Catalyzes the conversion of 4-diphosphocytidyl-2-C-methyl-D-erythritol 2-phosphate (CDP-ME2P) to 2-C-methyl-D-erythritol 2,4-cyclodiphosphate (ME-CPP) with a corresponding release of cytidine 5-monophosphate (CMP). The polypeptide is 2-C-methyl-D-erythritol 2,4-cyclodiphosphate synthase (Haemophilus influenzae (strain PittGG)).